The following is a 187-amino-acid chain: Prepilin peptidase-dependent protein B (187 aa).

Residues 1–7 (MPVKEQG) constitute a propeptide, leader sequence. Phe8 carries the post-translational modification N-methylphenylalanine. The chain crosses the membrane as a helical span at residues 8-28 (FSLLEVLIAMAISSVLLLGAA).

It is found in the membrane. Functionally, not yet known. This chain is Prepilin peptidase-dependent protein B (ppdB), found in Escherichia coli (strain K12).